The primary structure comprises 385 residues: Xanthosine methyltransferase 2 (385 aa).

Residue Tyr18 participates in S-adenosyl-L-homocysteine binding. Xanthosine contacts are provided by Asn21 and Asn25. Residues Cys62, Asn67, Asp101, Leu102, Ser140, Phe141, and Cys157 each contribute to the S-adenosyl-L-homocysteine site. Position 158 (Tyr158) interacts with xanthosine. Position 159 (Cys159) interacts with S-adenosyl-L-homocysteine. Positions 161 and 162 each coordinate xanthosine. 4 residues coordinate Mg(2+): Asn179, Asp261, Phe263, and Asn264. Ser329, Tyr334, and Tyr369 together coordinate xanthosine.

Belongs to the methyltransferase superfamily. Type-7 methyltransferase family. It depends on Mg(2+) as a cofactor. As to expression, expressed at low levels in young leaves but not in mature leaves. Barely detectable in fruits (grains).

The catalysed reaction is xanthosine + S-adenosyl-L-methionine = 7-methylxanthosine + S-adenosyl-L-homocysteine. Its pathway is alkaloid biosynthesis. Involved in the biosynthesis of caffeine. Specific for xanthosine and could not use xanthosine 5'-monophosphate (XMP) as substrate. Catalyzes the 7-N-methylation activity of xanthosine, but does not have 1-N- or 3-N-methylation activity. The protein is Xanthosine methyltransferase 2 of Coffea arabica (Arabian coffee).